The chain runs to 284 residues: Putative cysteine-rich repeat secretory protein 7 (284 aa).

The signal sequence occupies residues 1–24 (MARIILTAPLFYFFFSLLSHQTMS). 2 Gnk2-homologous domains span residues 26–128 (PQHM…NVSF) and 134–244 (SKPV…TFVL). Positions 247 to 284 (PAPSPSSLPPISPTSSPPLSLPPQLPPPLSQPPPPLST) are disordered.

This sequence belongs to the cysteine-rich repeat secretory protein family.

The protein resides in the secreted. The sequence is that of Putative cysteine-rich repeat secretory protein 7 (CRRSP7) from Arabidopsis thaliana (Mouse-ear cress).